The primary structure comprises 207 residues: MNLRNKLKLYVITDRRLKPEVESVREALEGGATAIQMRIKNAPTREMYEIGKTLRQLTREYDALFFVDDRVDVALAVDADGVQLGPEDMPIEVAKEIAPNLIIGASVYSLEEALEAEKKGADYLGAGSVFPTKTKEDARVIGLEGLRKIVESVKIPVVAIGGINKDNAREVLKTGVDGIAVISAVMGAEDVRKATEELRKIVEEVLG.

4-amino-2-methyl-5-(diphosphooxymethyl)pyrimidine is bound by residues Gln-36–Lys-40 and Asp-68. The Mg(2+) site is built by Asp-69 and Asp-88. Ser-106 is a 4-amino-2-methyl-5-(diphosphooxymethyl)pyrimidine binding site. Thr-132–Thr-134 is a 2-[(2R,5Z)-2-carboxy-4-methylthiazol-5(2H)-ylidene]ethyl phosphate binding site. A 4-amino-2-methyl-5-(diphosphooxymethyl)pyrimidine-binding site is contributed by Lys-135. 2-[(2R,5Z)-2-carboxy-4-methylthiazol-5(2H)-ylidene]ethyl phosphate contacts are provided by residues Gly-162 and Ile-182 to Ser-183.

This sequence belongs to the thiamine-phosphate synthase family. Mg(2+) is required as a cofactor.

It carries out the reaction 2-[(2R,5Z)-2-carboxy-4-methylthiazol-5(2H)-ylidene]ethyl phosphate + 4-amino-2-methyl-5-(diphosphooxymethyl)pyrimidine + 2 H(+) = thiamine phosphate + CO2 + diphosphate. It catalyses the reaction 2-(2-carboxy-4-methylthiazol-5-yl)ethyl phosphate + 4-amino-2-methyl-5-(diphosphooxymethyl)pyrimidine + 2 H(+) = thiamine phosphate + CO2 + diphosphate. The enzyme catalyses 4-methyl-5-(2-phosphooxyethyl)-thiazole + 4-amino-2-methyl-5-(diphosphooxymethyl)pyrimidine + H(+) = thiamine phosphate + diphosphate. It functions in the pathway cofactor biosynthesis; thiamine diphosphate biosynthesis; thiamine phosphate from 4-amino-2-methyl-5-diphosphomethylpyrimidine and 4-methyl-5-(2-phosphoethyl)-thiazole: step 1/1. Condenses 4-methyl-5-(beta-hydroxyethyl)thiazole monophosphate (THZ-P) and 2-methyl-4-amino-5-hydroxymethyl pyrimidine pyrophosphate (HMP-PP) to form thiamine monophosphate (TMP). This is Thiamine-phosphate synthase from Pyrococcus furiosus (strain ATCC 43587 / DSM 3638 / JCM 8422 / Vc1).